Here is a 409-residue protein sequence, read N- to C-terminus: tRNA-specific 2-thiouridylase MnmA (409 aa).

ATP contacts are provided by residues 40–47 and leucine 66; that span reads GLSGGVDS. The active-site Nucleophile is cysteine 127. A disulfide bond links cysteine 127 and cysteine 237. ATP is bound at residue glycine 152. Residues 187 to 189 form an interaction with tRNA region; sequence KDQ. Residue cysteine 237 is the Cysteine persulfide intermediate of the active site. The interaction with tRNA stretch occupies residues 342–343; the sequence is RY.

It belongs to the MnmA/TRMU family.

The protein resides in the cytoplasm. The enzyme catalyses S-sulfanyl-L-cysteinyl-[protein] + uridine(34) in tRNA + AH2 + ATP = 2-thiouridine(34) in tRNA + L-cysteinyl-[protein] + A + AMP + diphosphate + H(+). Its function is as follows. Catalyzes the 2-thiolation of uridine at the wobble position (U34) of tRNA, leading to the formation of s(2)U34. This Prochlorococcus marinus (strain MIT 9313) protein is tRNA-specific 2-thiouridylase MnmA.